Consider the following 335-residue polypeptide: Holliday junction branch migration complex subunit RuvB (335 aa).

The tract at residues 4-184 (ADRIISGQAK…FGIVQRLEFY (181 aa)) is large ATPase domain (RuvB-L). Residues Ile23, Arg24, Gly65, Lys68, Thr69, Thr70, 131-133 (EDY), Arg174, Tyr184, and Arg221 contribute to the ATP site. Thr69 provides a ligand contact to Mg(2+). The segment at 185–255 (SVEDLTSIVA…VAKQALSMLD (71 aa)) is small ATPAse domain (RuvB-S). A head domain (RuvB-H) region spans residues 258–335 (DAGFDYLDRK…RHFGLQKLSD (78 aa)). DNA-binding residues include Arg294, Arg313, and Arg318.

The protein belongs to the RuvB family. As to quaternary structure, homohexamer. Forms an RuvA(8)-RuvB(12)-Holliday junction (HJ) complex. HJ DNA is sandwiched between 2 RuvA tetramers; dsDNA enters through RuvA and exits via RuvB. An RuvB hexamer assembles on each DNA strand where it exits the tetramer. Each RuvB hexamer is contacted by two RuvA subunits (via domain III) on 2 adjacent RuvB subunits; this complex drives branch migration. In the full resolvosome a probable DNA-RuvA(4)-RuvB(12)-RuvC(2) complex forms which resolves the HJ.

Its subcellular location is the cytoplasm. The catalysed reaction is ATP + H2O = ADP + phosphate + H(+). The RuvA-RuvB-RuvC complex processes Holliday junction (HJ) DNA during genetic recombination and DNA repair, while the RuvA-RuvB complex plays an important role in the rescue of blocked DNA replication forks via replication fork reversal (RFR). RuvA specifically binds to HJ cruciform DNA, conferring on it an open structure. The RuvB hexamer acts as an ATP-dependent pump, pulling dsDNA into and through the RuvAB complex. RuvB forms 2 homohexamers on either side of HJ DNA bound by 1 or 2 RuvA tetramers; 4 subunits per hexamer contact DNA at a time. Coordinated motions by a converter formed by DNA-disengaged RuvB subunits stimulates ATP hydrolysis and nucleotide exchange. Immobilization of the converter enables RuvB to convert the ATP-contained energy into a lever motion, pulling 2 nucleotides of DNA out of the RuvA tetramer per ATP hydrolyzed, thus driving DNA branch migration. The RuvB motors rotate together with the DNA substrate, which together with the progressing nucleotide cycle form the mechanistic basis for DNA recombination by continuous HJ branch migration. Branch migration allows RuvC to scan DNA until it finds its consensus sequence, where it cleaves and resolves cruciform DNA. The sequence is that of Holliday junction branch migration complex subunit RuvB from Haemophilus influenzae (strain 86-028NP).